Consider the following 129-residue polypeptide: Cytochrome c oxidase subunit 5B, mitochondrial (129 aa).

Residues 1 to 31 constitute a mitochondrion transit peptide; it reads MASRLLRGAGTLAAQALRARGPSGAAAMRSM. An N6-acetyllysine mark is found at K68 and K86. 4 residues coordinate Zn(2+): C91, C93, C113, and C116. K121 bears the N6-acetyllysine mark.

Belongs to the cytochrome c oxidase subunit 5B family. As to quaternary structure, component of the cytochrome c oxidase (complex IV, CIV), a multisubunit enzyme composed of 14 subunits. The complex is composed of a catalytic core of 3 subunits MT-CO1, MT-CO2 and MT-CO3, encoded in the mitochondrial DNA, and 11 supernumerary subunits COX4I1 (or COX4I2), COX5A, COX5B, COX6A1 (or COX6A2), COX6B1 (or COX6B2), COX6C, COX7A2 (or COX7A1), COX7B, COX7C, COX8A and NDUFA4, which are encoded in the nuclear genome. The complex exists as a monomer or a dimer and forms supercomplexes (SCs) in the inner mitochondrial membrane with NADH-ubiquinone oxidoreductase (complex I, CI) and ubiquinol-cytochrome c oxidoreductase (cytochrome b-c1 complex, complex III, CIII), resulting in different assemblies (supercomplex SCI(1)III(2)IV(1) and megacomplex MCI(2)III(2)IV(2)).

Its subcellular location is the mitochondrion inner membrane. Its pathway is energy metabolism; oxidative phosphorylation. Functionally, component of the cytochrome c oxidase, the last enzyme in the mitochondrial electron transport chain which drives oxidative phosphorylation. The respiratory chain contains 3 multisubunit complexes succinate dehydrogenase (complex II, CII), ubiquinol-cytochrome c oxidoreductase (cytochrome b-c1 complex, complex III, CIII) and cytochrome c oxidase (complex IV, CIV), that cooperate to transfer electrons derived from NADH and succinate to molecular oxygen, creating an electrochemical gradient over the inner membrane that drives transmembrane transport and the ATP synthase. Cytochrome c oxidase is the component of the respiratory chain that catalyzes the reduction of oxygen to water. Electrons originating from reduced cytochrome c in the intermembrane space (IMS) are transferred via the dinuclear copper A center (CU(A)) of subunit 2 and heme A of subunit 1 to the active site in subunit 1, a binuclear center (BNC) formed by heme A3 and copper B (CU(B)). The BNC reduces molecular oxygen to 2 water molecules using 4 electrons from cytochrome c in the IMS and 4 protons from the mitochondrial matrix. This is Cytochrome c oxidase subunit 5B, mitochondrial (COX5B) from Homo sapiens (Human).